The following is a 659-amino-acid chain: DNA ligase (659 aa).

NAD(+) is bound by residues 32–36, 81–82, and Glu110; these read DAEYD and SL. Catalysis depends on Lys112, which acts as the N6-AMP-lysine intermediate. Positions 133, 168, 284, and 308 each coordinate NAD(+). Residues Cys402, Cys405, Cys420, and Cys425 each contribute to the Zn(2+) site. One can recognise a BRCT domain in the interval 582-659; that stretch reads AKPQIFAGKS…SEEEFAELLP (78 aa).

It belongs to the NAD-dependent DNA ligase family. LigA subfamily. The cofactor is Mg(2+). It depends on Mn(2+) as a cofactor.

It carries out the reaction NAD(+) + (deoxyribonucleotide)n-3'-hydroxyl + 5'-phospho-(deoxyribonucleotide)m = (deoxyribonucleotide)n+m + AMP + beta-nicotinamide D-nucleotide.. Functionally, DNA ligase that catalyzes the formation of phosphodiester linkages between 5'-phosphoryl and 3'-hydroxyl groups in double-stranded DNA using NAD as a coenzyme and as the energy source for the reaction. It is essential for DNA replication and repair of damaged DNA. This Desulfitobacterium hafniense (strain DSM 10664 / DCB-2) protein is DNA ligase.